The primary structure comprises 702 residues: Threonine--tRNA ligase (702 aa).

The disordered stretch occupies residues 1-30 (MSAPVHPVPGADGGDPLRPATPGLRSPQVP). The 70-residue stretch at 15 to 84 (DPLRPATPGL…DVDVEVTPVP (70 aa)) folds into the TGS domain. A catalytic region spans residues 279 to 585 (DHRKLGIELD…LTEHYAGAFP (307 aa)). Positions 384, 435, and 562 each coordinate Zn(2+).

The protein belongs to the class-II aminoacyl-tRNA synthetase family. In terms of assembly, homodimer. Zn(2+) serves as cofactor.

Its subcellular location is the cytoplasm. The catalysed reaction is tRNA(Thr) + L-threonine + ATP = L-threonyl-tRNA(Thr) + AMP + diphosphate + H(+). In terms of biological role, catalyzes the attachment of threonine to tRNA(Thr) in a two-step reaction: L-threonine is first activated by ATP to form Thr-AMP and then transferred to the acceptor end of tRNA(Thr). Also edits incorrectly charged L-seryl-tRNA(Thr). The sequence is that of Threonine--tRNA ligase from Mycobacterium leprae (strain Br4923).